Here is a 235-residue protein sequence, read N- to C-terminus: UPF0714 protein YmaC (235 aa).

The chain crosses the membrane as a helical span at residues 5–24; that stretch reads LLNVILVLAIVLFLRYVHYS.

It belongs to the UPF0714 family.

The protein localises to the cell membrane. The protein is UPF0714 protein YmaC (ymaC) of Bacillus subtilis (strain 168).